Reading from the N-terminus, the 212-residue chain is Pyridoxine/pyridoxamine 5'-phosphate oxidase (212 aa).

Residues 7–10 and Lys65 contribute to the substrate site; that span reads RAKY. Residues 60 to 65, 75 to 76, Lys82, and Gln104 each bind FMN; these read RTVLLK and FT. Substrate-binding residues include Tyr122, Arg126, and Ser130. FMN-binding positions include 139–140 and Trp184; that span reads QS. 190–192 serves as a coordination point for substrate; that stretch reads RLH. Arg194 contributes to the FMN binding site.

The protein belongs to the pyridoxamine 5'-phosphate oxidase family. In terms of assembly, homodimer. FMN is required as a cofactor.

It catalyses the reaction pyridoxamine 5'-phosphate + O2 + H2O = pyridoxal 5'-phosphate + H2O2 + NH4(+). The enzyme catalyses pyridoxine 5'-phosphate + O2 = pyridoxal 5'-phosphate + H2O2. Its pathway is cofactor metabolism; pyridoxal 5'-phosphate salvage; pyridoxal 5'-phosphate from pyridoxamine 5'-phosphate: step 1/1. The protein operates within cofactor metabolism; pyridoxal 5'-phosphate salvage; pyridoxal 5'-phosphate from pyridoxine 5'-phosphate: step 1/1. Functionally, catalyzes the oxidation of either pyridoxine 5'-phosphate (PNP) or pyridoxamine 5'-phosphate (PMP) into pyridoxal 5'-phosphate (PLP). In Aliarcobacter butzleri (strain RM4018) (Arcobacter butzleri), this protein is Pyridoxine/pyridoxamine 5'-phosphate oxidase.